Here is a 644-residue protein sequence, read N- to C-terminus: 3D-(3,5/4)-trihydroxycyclohexane-1,2-dione hydrolase 1 (644 aa).

A thiamine diphosphate-binding site is contributed by Glu-65. Residues Ser-442 to Gly-522 are thiamine pyrophosphate binding. Mg(2+)-binding residues include Asp-493 and Asn-520.

Belongs to the TPP enzyme family. It depends on Mg(2+) as a cofactor. Requires thiamine diphosphate as cofactor.

The enzyme catalyses 3D-3,5/4-trihydroxycyclohexane-1,2-dione + H2O = 5-deoxy-D-glucuronate + H(+). It functions in the pathway polyol metabolism; myo-inositol degradation into acetyl-CoA; acetyl-CoA from myo-inositol: step 3/7. Involved in the cleavage of the C1-C2 bond of 3D-(3,5/4)-trihydroxycyclohexane-1,2-dione (THcHDO) to yield 5-deoxy-glucuronate (5DG). The polypeptide is 3D-(3,5/4)-trihydroxycyclohexane-1,2-dione hydrolase 1 (Bacillus cereus (strain ZK / E33L)).